The following is a 400-amino-acid chain: Cytohesin-2 (400 aa).

Residues 10-63 (DLTPEERMELENIRRRKQELLVEIQRLREELSEAMSEVEGLEANEGSKTLQRNR) adopt a coiled-coil conformation. An SEC7 domain is found at 72 to 201 (FNMDPKKGIQ…VIMLNTSLHN (130 aa)). In terms of domain architecture, PH spans 259–376 (NPDREGWLLK…WIKSIQAAVS (118 aa)). A 1,2-diacyl-sn-glycero-3-phospho-(1D-myo-inositol-3,4,5-trisphosphate) contacts are provided by residues 268-276 (KLGGGRVKT), Arg-280, Tyr-291, Arg-301, Lys-339, Asn-350, and His-351. Residues 387-395 (RKKRISVKK) form a C-terminal autoinhibitory region region.

Heteromer. Composed of TAMALIN, CYTH2 and at least one GRM1. Interacts with ARRB1. Interacts with ARL4D; the interaction is direct. Directly interacts with CCDC120 through the coiled coil domain; this interaction stabilizes CCDC120, possibly by preventing its ubiquitination, and is required for neurite growth in neuroblastoma cells. Interacts with ARF1. Interacts with FRMD4A. Interacts (via N-terminal domain) with INAVA (via N-terminal domain). In terms of tissue distribution, widely expressed.

It localises to the cell membrane. The protein localises to the cytoplasm. It is found in the cell projection. Its subcellular location is the growth cone. The protein resides in the cell junction. It localises to the tight junction. The protein localises to the adherens junction. Acts as a guanine-nucleotide exchange factor (GEF). Promotes guanine-nucleotide exchange on ARF1, ARF3 and ARF6. Activates ARF factors through replacement of GDP with GTP. The cell membrane form, in association with ARL4 proteins, recruits ARF6 to the plasma membrane. Involved in neurite growth. This chain is Cytohesin-2, found in Homo sapiens (Human).